Consider the following 436-residue polypeptide: UPF0597 protein YhaM (436 aa).

Belongs to the UPF0597 family.

The sequence is that of UPF0597 protein YhaM from Escherichia coli O127:H6 (strain E2348/69 / EPEC).